The following is a 2335-amino-acid chain: Serine/threonine-protein kinase tor1 (2335 aa).

HEAT repeat units follow at residues 1-31 (MEYFSDLKNKNESIQLAAADQLKEFVHSSTK), 164-201 (LYISEIFQNLWTGLRDPKPLIRETAADALGASLDVVCQ), 331-371 (PYLQ…AVKL), 410-449 (PIQERLLNMVSQILTGKNFEIRTNDTYTPSFTNIYSAREP), 474-512 (YSLISFIQESVLSYLENDNSEIRIAAARTCCQVFARDPI), 522-560 (ESVAEVLEKLLTLGIADSDPKIRETVLSLLDERFDRHLA), 562-596 (PDNIRCLFIALNDEVFSIREIAIIIIGRLALYNPA), 642-679 (PYIQSIIHVILPKAADTSPGVSSAIISALGELASVEGE), 684-722 (DVRGSFMKLILVNLQDQSSTLKRLASLKCLRKLCGRSGY), 728-766 (LDYPPLLGALIGILQSEQPTPIRREVLRTLGVLGALDPY), 843-880 (VFLPQVVPTFLQVMQSLSASSAEFYFQQLTTLTSIIGP), 904-923 (LLVILELIDAIAIALQDEFK), 924-961 (FYLPQILSCMLKAFSLDNTSSRSVSYKVLQSFVIFGSN), 964-1003 (EYMHLVLPVIIRSFERDTIPLGFRKSALKCIAQLFQSVNF), and 1005-1042 (DHASRIIHPLVRMLGKSNGDLRAVIMDTLCAIVSQLGY). The region spanning 1226–1781 (VISAHASKCN…VYSLTVSSKS (556 aa)) is the FAT domain. The region spanning 1955–2269 (FHHTFEVISS…ARHADYAALS (315 aa)) is the PI3K/PI4K catalytic domain. The G-loop stretch occupies residues 1961-1967 (VISSKQR). Thr1972 carries the phosphothreonine; by PKB/AKT1 modification. A catalytic loop region spans residues 2134 to 2142 (GLGDRHPSN). An activation loop region spans residues 2154–2179 (HIDFGDCFEVAMHREKFPEKIPFRLT). The 33-residue stretch at 2303 to 2335 (EQLPVKAQVEKLIQQATAPENLCRCYVGWCSFW) folds into the FATC domain.

The protein belongs to the PI3/PI4-kinase family. The target of rapamycin complex 2 (TORC2) is composed of at least bit61, pop3/wat1, sin1, ste20 and tor1. Post-translationally, phosphorylation at Thr-1972 in the ATP-binding region by AKT1 strongly reduces kinase activity.

It is found in the cytoplasm. The enzyme catalyses L-seryl-[protein] + ATP = O-phospho-L-seryl-[protein] + ADP + H(+). It catalyses the reaction L-threonyl-[protein] + ATP = O-phospho-L-threonyl-[protein] + ADP + H(+). Its function is as follows. Catalytic component of TORC2, which regulates multiple cellular processes to control cell growth in response to environmental signals. In response to signals, TORC2 phosphorylates AGC protein kinase family members. TORC2 is required for cell survival under various stress conditions. TORC2 positively controls G1 cell-cycle arrest, sexual development and amino acid uptake. Positively regulates amino acid uptake through the control of expression of amino acid permeases. Responsible for the phosphorylation of AGC kinase gad8 at 'Ser-527' and 'Ser-546', activating gad8 kinase activity and promoting sexual development. The polypeptide is Serine/threonine-protein kinase tor1 (Schizosaccharomyces pombe (strain 972 / ATCC 24843) (Fission yeast)).